The following is a 481-amino-acid chain: Glutamate--tRNA ligase (481 aa).

The short motif at 28–38 (PSPTGFLHLGG) is the 'HIGH' region element. The segment covering 139–148 (RYDGTWRPEP) has biased composition (basic and acidic residues). The disordered stretch occupies residues 139–159 (RYDGTWRPEPGKTLPPVPADR). The 'KMSKS' region signature appears at 260 to 264 (KLSKR). An ATP-binding site is contributed by Lys-263.

The protein belongs to the class-I aminoacyl-tRNA synthetase family. Glutamate--tRNA ligase type 1 subfamily. As to quaternary structure, monomer.

The protein localises to the cytoplasm. The enzyme catalyses tRNA(Glu) + L-glutamate + ATP = L-glutamyl-tRNA(Glu) + AMP + diphosphate. Its function is as follows. Catalyzes the attachment of glutamate to tRNA(Glu) in a two-step reaction: glutamate is first activated by ATP to form Glu-AMP and then transferred to the acceptor end of tRNA(Glu). The protein is Glutamate--tRNA ligase of Bordetella parapertussis (strain 12822 / ATCC BAA-587 / NCTC 13253).